A 63-amino-acid chain; its full sequence is Cytochrome c oxidase subunit 7C, mitochondrial (63 aa).

A mitochondrion-targeting transit peptide spans 1-16 (MLGQSIRRFTTSVVRR). Residues 17-33 (SHYEEGPGKNLPFSVEN) are Mitochondrial matrix-facing. Lys25 is subject to N6-acetyllysine; alternate. Lys25 carries the N6-succinyllysine; alternate modification. The chain crosses the membrane as a helical span at residues 34–60 (KWSLLAKMCLYFGSAFATPFLVVRHQL). Over 61 to 63 (LKT) the chain is Mitochondrial intermembrane.

This sequence belongs to the cytochrome c oxidase VIIc family. In terms of assembly, component of the cytochrome c oxidase (complex IV, CIV), a multisubunit enzyme composed of 14 subunits. The complex is composed of a catalytic core of 3 subunits MT-CO1, MT-CO2 and MT-CO3, encoded in the mitochondrial DNA, and 11 supernumerary subunits COX4I1 (or COX4I2), COX5A, COX5B, COX6A1 (or COX6A2), COX6B1 (or COX6B2), COX6C, COX7A2 (or COX7A1), COX7B, COX7C, COX8A and NDUFA4, which are encoded in the nuclear genome. The complex exists as a monomer or a dimer and forms supercomplexes (SCs) in the inner mitochondrial membrane with NADH-ubiquinone oxidoreductase (complex I, CI) and ubiquinol-cytochrome c oxidoreductase (cytochrome b-c1 complex, complex III, CIII), resulting in different assemblies (supercomplex SCI(1)III(2)IV(1) and megacomplex MCI(2)III(2)IV(2)). Interacts with RAB5IF.

It is found in the mitochondrion inner membrane. It functions in the pathway energy metabolism; oxidative phosphorylation. Functionally, component of the cytochrome c oxidase, the last enzyme in the mitochondrial electron transport chain which drives oxidative phosphorylation. The respiratory chain contains 3 multisubunit complexes succinate dehydrogenase (complex II, CII), ubiquinol-cytochrome c oxidoreductase (cytochrome b-c1 complex, complex III, CIII) and cytochrome c oxidase (complex IV, CIV), that cooperate to transfer electrons derived from NADH and succinate to molecular oxygen, creating an electrochemical gradient over the inner membrane that drives transmembrane transport and the ATP synthase. Cytochrome c oxidase is the component of the respiratory chain that catalyzes the reduction of oxygen to water. Electrons originating from reduced cytochrome c in the intermembrane space (IMS) are transferred via the dinuclear copper A center (CU(A)) of subunit 2 and heme A of subunit 1 to the active site in subunit 1, a binuclear center (BNC) formed by heme A3 and copper B (CU(B)). The BNC reduces molecular oxygen to 2 water molecules using 4 electrons from cytochrome c in the IMS and 4 protons from the mitochondrial matrix. This Homo sapiens (Human) protein is Cytochrome c oxidase subunit 7C, mitochondrial (COX7C).